Here is a 283-residue protein sequence, read N- to C-terminus: Protein boule-like (283 aa).

The disordered stretch occupies residues 1–25 (MQTDSLSPSPNPVSPVPLNNPTSAP). One can recognise an RRM domain in the interval 33 to 110 (NRIFVGGIDF…KKLNIGPAIR (78 aa)). The DAZ domain maps to 160 to 184 (PSRSVCSSPVMVAQPIYQQPAYHYQ).

Belongs to the RRM DAZ family. In terms of assembly, interacts with DAZ1 and DAZL.

It localises to the cytoplasm. Functionally, probable RNA-binding protein, which may be required during spermatogenesis. May act by binding to the 3'-UTR of mRNAs and regulating their translation. The polypeptide is Protein boule-like (BOLL) (Macaca fascicularis (Crab-eating macaque)).